The primary structure comprises 66 residues: Large ribosomal subunit protein bL31 (66 aa).

Residues cysteine 16, cysteine 18, cysteine 36, and cysteine 39 each contribute to the Zn(2+) site.

It belongs to the bacterial ribosomal protein bL31 family. Type A subfamily. Part of the 50S ribosomal subunit. Zn(2+) is required as a cofactor.

In terms of biological role, binds the 23S rRNA. This chain is Large ribosomal subunit protein bL31, found in Anoxybacillus flavithermus (strain DSM 21510 / WK1).